The following is a 413-amino-acid chain: 5'-deoxyadenosine deaminase (413 aa).

2 residues coordinate Zn(2+): His-57 and His-59. Substrate contacts are provided by Glu-86 and His-171. Residue His-198 participates in Zn(2+) binding. Glu-201 and Asp-286 together coordinate substrate. Asp-286 is a binding site for Zn(2+).

It belongs to the metallo-dependent hydrolases superfamily. MTA/SAH deaminase family. In terms of assembly, homotetramer. Zn(2+) is required as a cofactor.

It carries out the reaction 5'-deoxyadenosine + H2O + H(+) = 5'-deoxyinosine + NH4(+). The catalysed reaction is S-adenosyl-L-homocysteine + H2O + H(+) = S-inosyl-L-homocysteine + NH4(+). It catalyses the reaction S-methyl-5'-thioadenosine + H2O + H(+) = S-methyl-5'-thioinosine + NH4(+). The enzyme catalyses adenosine + H2O + H(+) = inosine + NH4(+). It functions in the pathway amino-acid biosynthesis; S-adenosyl-L-methionine biosynthesis. In terms of biological role, catalyzes the deamination of three SAM-derived enzymatic products, namely 5'-deoxyadenosine, S-adenosyl-L-homocysteine, and 5'-methylthioadenosine, to produce the inosine analogs. Can also deaminate adenosine. The preferred substrate for this enzyme is 5'-deoxyadenosine, but all these substrates are efficiently deaminated. Likely functions in a S-adenosyl-L-methionine (SAM) recycling pathway from S-adenosyl-L-homocysteine (SAH) produced from SAM-dependent methylation reactions. May also be involved in the recycling of 5'-deoxyadenosine, whereupon the 5'-deoxyribose moiety of 5'-deoxyinosine is further metabolized to deoxyhexoses used for the biosynthesis of aromatic amino acids in methanogens. This Methanothrix thermoacetophila (strain DSM 6194 / JCM 14653 / NBRC 101360 / PT) (Methanosaeta thermophila) protein is 5'-deoxyadenosine deaminase.